Reading from the N-terminus, the 505-residue chain is Maturase K (505 aa).

It belongs to the intron maturase 2 family. MatK subfamily.

The protein resides in the plastid. The protein localises to the chloroplast. Usually encoded in the trnK tRNA gene intron. Probably assists in splicing its own and other chloroplast group II introns. The protein is Maturase K of Rhizophora stylosa (Bakau).